A 548-amino-acid polypeptide reads, in one-letter code: pH-responsive protein 1 (548 aa).

The signal sequence occupies residues 1–20; sequence MYSLIKSLATFATLFSLTLA. Asn-41 carries N-linked (GlcNAc...) asparagine glycosylation. A disulfide bond links Cys-82 and Cys-111. Asn-173 and Asn-261 each carry an N-linked (GlcNAc...) asparagine glycan. Cystine bridges form between Cys-224/Cys-358, Cys-242/Cys-273, Cys-381/Cys-432, Cys-390/Cys-456, and Cys-409/Cys-414. Residues 483–518 are disordered; the sequence is GKASSSGGSSKSGSSSASASGSSSSSTSSGSSSSSG. Ser-517 carries GPI-anchor amidated serine lipidation. Positions 518–548 are cleaved as a propeptide — removed in mature form; it reads GVKATQQMSMVKLVSIITIVTAFVGGMSVVF.

Belongs to the glycosyl hydrolase 72 family.

Its subcellular location is the cell membrane. In terms of biological role, required for apical cell growth and plays an essential role in morphogenesis. May be integral to the pathogenic ability of the organism. The chain is pH-responsive protein 1 (PHR1) from Candida albicans (strain SC5314 / ATCC MYA-2876) (Yeast).